The following is a 105-amino-acid chain: Cuticle protein AMP1A (105 aa).

Residues 1 to 21 (DRDAQTLTDERSDQGDGNFRY) form a disordered region. The Chitin-binding type R&amp;R domain occupies 16 to 81 (DGNFRYEFET…PSSDLLPVGP (66 aa)).

Arthrodial membrane.

The protein is Cuticle protein AMP1A of Homarus americanus (American lobster).